The chain runs to 289 residues: Early E1A protein (289 aa).

The tract at residues 41 to 49 (PTLHELYDL) is interaction with RB1 in competition with E2F1. Positions 76–140 (EGIDLLTFPP…PSDDEDEEGE (65 aa)) are interaction with UBE2I. A disordered region spans residues 82-107 (TFPPAPGSPEPPHLSRQPEQPEQRAL). The segment covering 84 to 93 (PPAPGSPEPP) has biased composition (pro residues). Ser-89 is modified (phosphoserine; by host). A PXLXP motif, interaction with host ZMYND11 motif is present at residues 113–117 (PNLVP). The short motif at 122–126 (LTCHE) is the LXCXE motif, interaction with host RB1 and TMEM173/STING element. Residues 154–174 (CRSCHYHRRNTGDPDIMCSLC) fold into a zinc finger. The tract at residues 186–240 (PVSEPEPEPEPEPEPARPTRRPKMAPAILRRPTSPVSRECNSSTDSCDSGPSNTP) is disordered. Residues Ser-219 and Ser-231 each carry the phosphoserine; by host modification. The span at 219–237 (SPVSRECNSSTDSCDSGPS) shows a compositional bias: polar residues. The short motif at 258-289 (RVGGRRQAVECIEDLLNEPGQPLDLSCKRPRP) is the Bipartite nuclear localization signal element. Residues 279 to 283 (PLDLS) carry the PXDLS motif, CTBP-binding motif.

Belongs to the adenoviridae E1A protein family. Interacts with host UBE2I; this interaction interferes with polySUMOylation. Interacts with host RB1; this interaction induces the aberrant dissociation of RB1-E2F1 complex thereby disrupting the activity of RB1 and activating E2F1-regulated genes. Interacts with host ATF7; the interaction enhances ATF7-mediated viral transactivation activity which requires the zinc binding domains of both proteins. Isoform early E1A 32 kDa protein and isoform early E1A 26 kDa protein interact (via N-terminus) with CUL1 and E3 ubiquitin ligase RBX1; these interactions inhibit RBX1-CUL1-dependent elongation reaction of ubiquitin chains and attenuate ubiquitination of SCF(FBXW7) target proteins. Interacts (via PXLXP motif) with host ZMYND11/BS69 (via MYND-type zinc finger); this interaction inhibits E1A mediated transactivation. Interacts with host EP300; this interaction stimulates the acetylation of RB1 by recruiting EP300 and RB1 into a multimeric-protein complex. Interacts with host CTBP1 and CTBP2; this interaction seems to potentiate viral replication. Interacts with host DCAF7 (ref.16). Interacts with host DYRK1A. Interacts with host KPNA4; this interaction allows E1A import into the host nucleus. Interacts with host EP400; this interaction stabilizes MYC. Interacts with host TBP protein; this interaction probably disrupts the TBP-TATA complex. Interacts (via LXCXE motif) with host TMEM173/STING; this interaction impairs the ability of TMEM173/STING to sense cytosolic DNA and promote the production of type I interferon (IFN-alpha and IFN-beta). Interacts (via C-terminus) with host ZBED1/hDREF (via C-terminus); the interaction is direct.

It localises to the host nucleus. Plays a role in viral genome replication by driving entry of quiescent cells into the cell cycle. Stimulation of progression from G1 to S phase allows the virus to efficiently use the cellular DNA replicating machinery to achieve viral genome replication. E1A protein has both transforming and trans-activating activities. Induces the disassembly of the E2F1 transcription factor from RB1 by direct competition for the same binding site on RB1, with subsequent transcriptional activation of E2F1-regulated S-phase genes and of the E2 region of the adenoviral genome. Release of E2F1 leads to the ARF-mediated inhibition of MDM2 and causes TP53/p53 to accumulate because it is not targeted for degradation by MDM2-mediated ubiquitination anymore. This increase in TP53, in turn, would arrest the cell proliferation and direct its death but this effect is counteracted by the viral protein E1B-55K. Inactivation of the ability of RB1 to arrest the cell cycle is critical for cellular transformation, uncontrolled cellular growth and proliferation induced by viral infection. Interaction with RBX1 and CUL1 inhibits ubiquitination of the proteins targeted by SCF(FBXW7) ubiquitin ligase complex, and may be linked to unregulated host cell proliferation. The tumorigenesis-restraining activity of E1A may be related to the disruption of the host CtBP-CtIP complex through the CtBP binding motif. Interaction with host TMEM173/STING impairs the ability of TMEM173/STING to sense cytosolic DNA and promote the production of type I interferon (IFN-alpha and IFN-beta). Promotes the sumoylation of host ZBED1/hDREF with SUMO1. In Homo sapiens (Human), this protein is Early E1A protein.